Consider the following 181-residue polypeptide: Large ribosomal subunit protein uL5 (181 aa).

It belongs to the universal ribosomal protein uL5 family. In terms of assembly, part of the 50S ribosomal subunit; part of the 5S rRNA/L5/L18/L25 subcomplex. Contacts the 5S rRNA and the P site tRNA. Forms a bridge to the 30S subunit in the 70S ribosome.

Functionally, this is one of the proteins that bind and probably mediate the attachment of the 5S RNA into the large ribosomal subunit, where it forms part of the central protuberance. In the 70S ribosome it contacts protein S13 of the 30S subunit (bridge B1b), connecting the 2 subunits; this bridge is implicated in subunit movement. Contacts the P site tRNA; the 5S rRNA and some of its associated proteins might help stabilize positioning of ribosome-bound tRNAs. This chain is Large ribosomal subunit protein uL5, found in Helicobacter pylori (strain G27).